We begin with the raw amino-acid sequence, 433 residues long: Histidine--tRNA ligase (433 aa).

This sequence belongs to the class-II aminoacyl-tRNA synthetase family. In terms of assembly, homodimer.

It is found in the cytoplasm. The enzyme catalyses tRNA(His) + L-histidine + ATP = L-histidyl-tRNA(His) + AMP + diphosphate + H(+). In Pseudothermotoga lettingae (strain ATCC BAA-301 / DSM 14385 / NBRC 107922 / TMO) (Thermotoga lettingae), this protein is Histidine--tRNA ligase.